The chain runs to 482 residues: Hydrogenase transcriptional regulatory protein HoxA (482 aa).

Residues 7 to 121 (TVLVVDDETR…HLIDTVRQAV (115 aa)) form the Response regulatory domain. Aspartate 55 carries the post-translational modification 4-aspartylphosphate. Positions 167–394 (APGSPLDAVC…LRNEIYRAVA (228 aa)) constitute a Sigma-54 factor interaction domain. ATP-binding positions include 193 to 200 (GESGTGKE) and 265 to 274 (EIGDTSPAFQ). The H-T-H motif DNA-binding region spans 456–475 (KTHAAKELGLSRVGLRQKLL).

Its subcellular location is the cytoplasm. Functionally, probable member of the two-component regulatory system involved in the regulation of the hydrogenase activity. HoxA is probably phosphorylated by a sensory component (which could be HoxX) and then acts in conjunction with sigma-54 as a transcriptional activator. The polypeptide is Hydrogenase transcriptional regulatory protein HoxA (hoxA) (Cupriavidus necator (strain ATCC 17699 / DSM 428 / KCTC 22496 / NCIMB 10442 / H16 / Stanier 337) (Ralstonia eutropha)).